Reading from the N-terminus, the 200-residue chain is MTSANIQMAVYCFDVINAQLNREKEPPVPKEIPNVKLPLFVTWKKGHQHDLRGCIGTFSDLRLGEGLNEYAKTSAFHDSRFKPISREEVPSLQCGVSLLINFEPIHNFRDWTIGRHGVRMNFDDGHRNRSAVFLPEVAQEQGWNHVETIDHLIRKSGYGGHINDALRSALRIVRFQSSKLVLDYKDYVNYKQSHGLPLPR.

Positions 1-191 (MTSANIQMAV…LDYKDYVNYK (191 aa)) constitute an AMMECR1 domain.

This is an uncharacterized protein from Caenorhabditis elegans.